Here is an 892-residue protein sequence, read N- to C-terminus: Alanine--tRNA ligase (892 aa).

His-596, His-600, Cys-700, and His-704 together coordinate Zn(2+).

Belongs to the class-II aminoacyl-tRNA synthetase family. Requires Zn(2+) as cofactor.

The protein resides in the cytoplasm. The catalysed reaction is tRNA(Ala) + L-alanine + ATP = L-alanyl-tRNA(Ala) + AMP + diphosphate. In terms of biological role, catalyzes the attachment of alanine to tRNA(Ala) in a two-step reaction: alanine is first activated by ATP to form Ala-AMP and then transferred to the acceptor end of tRNA(Ala). Also edits incorrectly charged Ser-tRNA(Ala) and Gly-tRNA(Ala) via its editing domain. The chain is Alanine--tRNA ligase from Methanococcus maripaludis (strain DSM 14266 / JCM 13030 / NBRC 101832 / S2 / LL).